Reading from the N-terminus, the 166-residue chain is NAD(P)H-quinone oxidoreductase subunit I, chloroplastic (166 aa).

4Fe-4S ferredoxin-type domains lie at 55–84 (GRIH…VDWK) and 95–124 (LNYS…MTEE). [4Fe-4S] cluster contacts are provided by C64, C67, C70, C74, C104, C107, C110, and C114.

It belongs to the complex I 23 kDa subunit family. As to quaternary structure, NDH is composed of at least 16 different subunits, 5 of which are encoded in the nucleus. It depends on [4Fe-4S] cluster as a cofactor.

Its subcellular location is the plastid. The protein resides in the chloroplast thylakoid membrane. The catalysed reaction is a plastoquinone + NADH + (n+1) H(+)(in) = a plastoquinol + NAD(+) + n H(+)(out). It carries out the reaction a plastoquinone + NADPH + (n+1) H(+)(in) = a plastoquinol + NADP(+) + n H(+)(out). In terms of biological role, NDH shuttles electrons from NAD(P)H:plastoquinone, via FMN and iron-sulfur (Fe-S) centers, to quinones in the photosynthetic chain and possibly in a chloroplast respiratory chain. The immediate electron acceptor for the enzyme in this species is believed to be plastoquinone. Couples the redox reaction to proton translocation, and thus conserves the redox energy in a proton gradient. In Perymeniopsis ovalifolia, this protein is NAD(P)H-quinone oxidoreductase subunit I, chloroplastic.